Reading from the N-terminus, the 72-residue chain is UPF0154 protein LBA1278 (72 aa).

A helical transmembrane segment spans residues 3-23 (LGLAIFLIIIALLVGATAGFY).

This sequence belongs to the UPF0154 family.

It localises to the cell membrane. The protein is UPF0154 protein LBA1278 of Lactobacillus acidophilus (strain ATCC 700396 / NCK56 / N2 / NCFM).